Reading from the N-terminus, the 381-residue chain is MKLHEHQAKTIFADAGIPVPDSRLATTVDEALDAVDEIGYPAAIKAQVHVGGRGKAGGIKIATDRDEAEQYAEEILGMDLKGYTVDQILVEQGVDFVDELYVGVTMDRGEGQPVLMVSTEGGVNIEEVAEENPDAIAREHVDPAFGLHPYQARKVVYEAGVDADVALDVASILTTLYDLYEENDASEIEVNPVMITSDRDVIAADAVMNIDEDALFRHPDLAEMAEESYEDDLERKAGEYGFDYVRLSGNVGIIGNGAGLVMTTLDLVDYYGGKPANFLDIGGGAKAERVTKALDMVFSDENVDAVVFNIFGGITRGDEVAKGINEALEQFDEIPKKVVVRLAGTNAEEGMEILNTDLVEVEETLEDAVQRAVKNAEEVTQ.

Residues 9 to 236 form the ATP-grasp domain; the sequence is KTIFADAGIP…ESYEDDLERK (228 aa). ATP contacts are provided by residues Lys45, 52 to 54, Glu91, Val94, and Glu99; that span reads GRG. Mg(2+) contacts are provided by Asn191 and Asp205. Substrate contacts are provided by residues Asn256 and 313–315; that span reads GIT.

Belongs to the succinate/malate CoA ligase beta subunit family. Heterotetramer of two alpha and two beta subunits. The cofactor is Mg(2+).

The catalysed reaction is succinate + ATP + CoA = succinyl-CoA + ADP + phosphate. It carries out the reaction GTP + succinate + CoA = succinyl-CoA + GDP + phosphate. The protein operates within carbohydrate metabolism; tricarboxylic acid cycle; succinate from succinyl-CoA (ligase route): step 1/1. Functionally, succinyl-CoA synthetase functions in the citric acid cycle (TCA), coupling the hydrolysis of succinyl-CoA to the synthesis of either ATP or GTP and thus represents the only step of substrate-level phosphorylation in the TCA. The beta subunit provides nucleotide specificity of the enzyme and binds the substrate succinate, while the binding sites for coenzyme A and phosphate are found in the alpha subunit. The polypeptide is Succinate--CoA ligase [ADP-forming] subunit beta (Halorubrum lacusprofundi (strain ATCC 49239 / DSM 5036 / JCM 8891 / ACAM 34)).